The primary structure comprises 208 residues: Putative 3-methyladenine DNA glycosylase (208 aa).

Belongs to the DNA glycosylase MPG family.

The chain is Putative 3-methyladenine DNA glycosylase from Nitrobacter winogradskyi (strain ATCC 25391 / DSM 10237 / CIP 104748 / NCIMB 11846 / Nb-255).